Reading from the N-terminus, the 1062-residue chain is Translation initiation factor IF-2 (1062 aa).

Positions serine 34 to asparagine 463 are disordered. A compositionally biased stretch (pro residues) spans proline 76–alanine 121. Over residues serine 122–valine 153 the composition is skewed to low complexity. Residues proline 154–glycine 178 show a composition bias toward pro residues. Positions threonine 198–alanine 214 are enriched in gly residues. Residues arginine 294–glycine 305 are compositionally biased toward pro residues. Composition is skewed to gly residues over residues proline 307–glycine 324 and proline 344–glycine 430. Over residues arginine 431–lysine 442 the composition is skewed to basic residues. Positions serine 555–aspartate 727 constitute a tr-type G domain. Positions glycine 564–threonine 571 are G1. Glycine 564–threonine 571 provides a ligand contact to GTP. Residues glycine 589–histidine 593 are G2. Residues aspartate 614–glycine 617 are G3. GTP-binding positions include aspartate 614–histidine 618 and asparagine 668–aspartate 671. The segment at asparagine 668–aspartate 671 is G4. The tract at residues serine 704–arginine 706 is G5.

Belongs to the TRAFAC class translation factor GTPase superfamily. Classic translation factor GTPase family. IF-2 subfamily.

The protein localises to the cytoplasm. Functionally, one of the essential components for the initiation of protein synthesis. Protects formylmethionyl-tRNA from spontaneous hydrolysis and promotes its binding to the 30S ribosomal subunits. Also involved in the hydrolysis of GTP during the formation of the 70S ribosomal complex. In Frankia casuarinae (strain DSM 45818 / CECT 9043 / HFP020203 / CcI3), this protein is Translation initiation factor IF-2.